The primary structure comprises 196 residues: dTTP/UTP pyrophosphatase (196 aa).

The active-site Proton acceptor is aspartate 72.

This sequence belongs to the Maf family. YhdE subfamily. The cofactor is a divalent metal cation.

The protein resides in the cytoplasm. It catalyses the reaction dTTP + H2O = dTMP + diphosphate + H(+). The catalysed reaction is UTP + H2O = UMP + diphosphate + H(+). Functionally, nucleoside triphosphate pyrophosphatase that hydrolyzes dTTP and UTP. May have a dual role in cell division arrest and in preventing the incorporation of modified nucleotides into cellular nucleic acids. This chain is dTTP/UTP pyrophosphatase, found in Chlamydia trachomatis serovar L2 (strain ATCC VR-902B / DSM 19102 / 434/Bu).